A 281-amino-acid chain; its full sequence is Nucleotide-binding protein Tpet_1006 (281 aa).

9–16 (GLSGAGKT) lines the ATP pocket. Residue 58 to 61 (DVRS) coordinates GTP.

This sequence belongs to the RapZ-like family.

Displays ATPase and GTPase activities. This is Nucleotide-binding protein Tpet_1006 from Thermotoga petrophila (strain ATCC BAA-488 / DSM 13995 / JCM 10881 / RKU-1).